We begin with the raw amino-acid sequence, 110 residues long: Large ribosomal subunit protein uL22 (110 aa).

This sequence belongs to the universal ribosomal protein uL22 family. Part of the 50S ribosomal subunit.

Functionally, this protein binds specifically to 23S rRNA; its binding is stimulated by other ribosomal proteins, e.g. L4, L17, and L20. It is important during the early stages of 50S assembly. It makes multiple contacts with different domains of the 23S rRNA in the assembled 50S subunit and ribosome. Its function is as follows. The globular domain of the protein is located near the polypeptide exit tunnel on the outside of the subunit, while an extended beta-hairpin is found that lines the wall of the exit tunnel in the center of the 70S ribosome. The protein is Large ribosomal subunit protein uL22 of Pasteurella multocida (strain Pm70).